Consider the following 461-residue polypeptide: Ornithine decarboxylase (461 aa).

Lys69 bears the N6-(pyridoxal phosphate)lysine mark. Residues Ser200, Gly237, and 274–277 (EPGR) contribute to the pyridoxal 5'-phosphate site. Position 303 is a phosphoserine; by CK2 (Ser303). 331–332 (YD) serves as a coordination point for substrate. Residue Cys360 is the Proton donor; shared with dimeric partner of the active site. Position 360 is an S-nitrosocysteine (Cys360). Asp361 is a substrate binding site. Residue Tyr389 coordinates pyridoxal 5'-phosphate.

Belongs to the Orn/Lys/Arg decarboxylase class-II family. As to quaternary structure, homodimer. Only the dimer is catalytically active, as the active sites are constructed of residues from both monomers. Pyridoxal 5'-phosphate serves as cofactor.

It carries out the reaction L-ornithine + H(+) = putrescine + CO2. It participates in amine and polyamine biosynthesis; putrescine biosynthesis via L-ornithine pathway; putrescine from L-ornithine: step 1/1. Its activity is regulated as follows. Inhibited by antizymes (AZs) OAZ1, OAZ2 and OAZ3 in response to polyamine levels. AZs inhibit the assembly of the functional homodimer by binding to ODC monomers. Additionally, OAZ1 targets ODC monomers for ubiquitin-independent proteolytic destruction by the 26S proteasome. Catalyzes the first and rate-limiting step of polyamine biosynthesis that converts ornithine into putrescine, which is the precursor for the polyamines, spermidine and spermine. Polyamines are essential for cell proliferation and are implicated in cellular processes, ranging from DNA replication to apoptosis. The sequence is that of Ornithine decarboxylase (Odc1) from Rattus norvegicus (Rat).